An 829-amino-acid chain; its full sequence is Trimethylamine-N-oxide reductase (829 aa).

Positions 1–31 (MNRRDFLKGIASSSFVVLGGSSVLTPLNALA) form a signal peptide, tat-type signal. Ser-180 serves as a coordination point for Mo-bis(molybdopterin guanine dinucleotide).

The protein belongs to the prokaryotic molybdopterin-containing oxidoreductase family. Mo-bis(molybdopterin guanine dinucleotide) serves as cofactor. In terms of processing, predicted to be exported by the Tat system. The position of the signal peptide cleavage has been experimentally proven.

The protein resides in the periplasm. It carries out the reaction trimethylamine + 2 Fe(III)-[cytochrome c] + H2O = trimethylamine N-oxide + 2 Fe(II)-[cytochrome c] + 3 H(+). Reduces trimethylamine-N-oxide (TMAO) into trimethylamine; an anaerobic reaction coupled to energy-yielding reactions. This is Trimethylamine-N-oxide reductase (torA) from Shewanella massilia.